A 275-amino-acid chain; its full sequence is Membrane protein insertase YidC 2 (275 aa).

Positions 1–21 (MKKKNIILISVLLGALLLLTG) are cleaved as a signal peptide. A lipid anchor (N-palmitoyl cysteine) is attached at cysteine 22. Cysteine 22 carries S-diacylglycerol cysteine lipidation. The next 4 helical transmembrane spans lie at 48-68 (FVAK…TLLI), 133-153 (QMGC…YYAI), 174-194 (MVLA…SMIG), and 212-232 (IMIL…WAVG).

It belongs to the OXA1/ALB3/YidC family. Type 2 subfamily.

It is found in the cell membrane. Its function is as follows. Required for the insertion and/or proper folding and/or complex formation of integral membrane proteins into the membrane. Involved in integration of membrane proteins that insert both dependently and independently of the Sec translocase complex, as well as at least some lipoproteins. This is Membrane protein insertase YidC 2 from Listeria monocytogenes serotype 4b (strain F2365).